A 203-amino-acid chain; its full sequence is dITP/XTP pyrophosphatase (203 aa).

8 to 13 (TANKGK) is a substrate binding site. The Mg(2+) site is built by E41 and D70. D70 functions as the Proton acceptor in the catalytic mechanism. Substrate-binding positions include S71, 153–156 (FGYD), K176, and 181–182 (HR).

This sequence belongs to the HAM1 NTPase family. Homodimer. It depends on Mg(2+) as a cofactor.

It catalyses the reaction XTP + H2O = XMP + diphosphate + H(+). The catalysed reaction is dITP + H2O = dIMP + diphosphate + H(+). The enzyme catalyses ITP + H2O = IMP + diphosphate + H(+). Its function is as follows. Pyrophosphatase that catalyzes the hydrolysis of nucleoside triphosphates to their monophosphate derivatives, with a high preference for the non-canonical purine nucleotides XTP (xanthosine triphosphate), dITP (deoxyinosine triphosphate) and ITP. Seems to function as a house-cleaning enzyme that removes non-canonical purine nucleotides from the nucleotide pool, thus preventing their incorporation into DNA/RNA and avoiding chromosomal lesions. In Listeria monocytogenes serovar 1/2a (strain ATCC BAA-679 / EGD-e), this protein is dITP/XTP pyrophosphatase.